The following is a 322-amino-acid chain: Probable cell division protein WhiA (322 aa).

A DNA-binding region (H-T-H motif) is located at residues 279–312 (SLKELGELWTPPVGKSGVNHRIRKIERLAEKLRS).

The protein belongs to the WhiA family.

Its function is as follows. Involved in cell division and chromosome segregation. This is Probable cell division protein WhiA from Desulforamulus reducens (strain ATCC BAA-1160 / DSM 100696 / MI-1) (Desulfotomaculum reducens).